Here is a 79-residue protein sequence, read N- to C-terminus: Toxin 3FTx-Oxy5 (79 aa).

Positions 1–23 (MKTLLLTLVVMTIVCLDLGYTLT) are cleaved as a signal peptide. 4 disulfides stabilise this stretch: C24–C41, C34–C59, C63–C71, and C72–C77.

Belongs to the three-finger toxin family. Short-chain subfamily. In terms of tissue distribution, expressed by the venom gland.

The protein localises to the secreted. The protein is Toxin 3FTx-Oxy5 of Oxyuranus microlepidotus (Inland taipan).